The primary structure comprises 428 residues: Kynureninase (428 aa).

Pyridoxal 5'-phosphate-binding positions include T104, T105, 132 to 135, D213, H216, and Y238; that span reads FPSD. K239 is subject to N6-(pyridoxal phosphate)lysine. Pyridoxal 5'-phosphate contacts are provided by W267 and T295.

Belongs to the kynureninase family. In terms of assembly, homodimer. Pyridoxal 5'-phosphate serves as cofactor.

It carries out the reaction L-kynurenine + H2O = anthranilate + L-alanine + H(+). The enzyme catalyses 3-hydroxy-L-kynurenine + H2O = 3-hydroxyanthranilate + L-alanine + H(+). It functions in the pathway amino-acid degradation; L-kynurenine degradation; L-alanine and anthranilate from L-kynurenine: step 1/1. Its pathway is cofactor biosynthesis; NAD(+) biosynthesis; quinolinate from L-kynurenine: step 2/3. Its function is as follows. Catalyzes the cleavage of L-kynurenine (L-Kyn) and L-3-hydroxykynurenine (L-3OHKyn) into anthranilic acid (AA) and 3-hydroxyanthranilic acid (3-OHAA), respectively. The sequence is that of Kynureninase from Geobacillus thermodenitrificans (strain NG80-2).